Here is a 205-residue protein sequence, read N- to C-terminus: Large ribosomal subunit protein uL4 (205 aa).

The interval 54–78 is disordered; the sequence is GDISGTTAKPHRQKHTGRARQGSLR. Residues 62-71 are compositionally biased toward basic residues; that stretch reads KPHRQKHTGR.

It belongs to the universal ribosomal protein uL4 family. As to quaternary structure, part of the 50S ribosomal subunit.

One of the primary rRNA binding proteins, this protein initially binds near the 5'-end of the 23S rRNA. It is important during the early stages of 50S assembly. It makes multiple contacts with different domains of the 23S rRNA in the assembled 50S subunit and ribosome. In terms of biological role, forms part of the polypeptide exit tunnel. The protein is Large ribosomal subunit protein uL4 of Ehrlichia chaffeensis (strain ATCC CRL-10679 / Arkansas).